The sequence spans 79 residues: Acyl carrier protein (79 aa).

A Carrier domain is found at 2–77 (ENIEQRVKKI…QAIDYVTAHL (76 aa)). S37 is modified (O-(pantetheine 4'-phosphoryl)serine).

It belongs to the acyl carrier protein (ACP) family. In terms of processing, 4'-phosphopantetheine is transferred from CoA to a specific serine of apo-ACP by AcpS. This modification is essential for activity because fatty acids are bound in thioester linkage to the sulfhydryl of the prosthetic group.

The protein localises to the cytoplasm. It participates in lipid metabolism; fatty acid biosynthesis. Its function is as follows. Carrier of the growing fatty acid chain in fatty acid biosynthesis. This Laribacter hongkongensis (strain HLHK9) protein is Acyl carrier protein.